The sequence spans 37 residues: Large ribosomal subunit protein bL36 (37 aa).

The protein belongs to the bacterial ribosomal protein bL36 family.

The chain is Large ribosomal subunit protein bL36 from Acidothermus cellulolyticus (strain ATCC 43068 / DSM 8971 / 11B).